Reading from the N-terminus, the 318-residue chain is Death effector domain-containing protein (318 aa).

One can recognise a DED domain in the interval 25–103; the sequence is SLHRMFDIVG…RHDLLPYVTL (79 aa). The disordered stretch occupies residues 128–191; that stretch reads PRALSDPEPR…SVTPDPKEKQ (64 aa).

In terms of assembly, interacts with CASP8, CASP10, KRT8, KRT18, CASP3 and FADD. Homodimerizes and heterodimerizes with DEDD2. In terms of processing, exists predominantly in a mono- or diubiquitinated form. In terms of tissue distribution, ubiquitously expressed.

The protein resides in the cytoplasm. It is found in the nucleus. Its subcellular location is the nucleolus. In terms of biological role, a scaffold protein that directs CASP3 to certain substrates and facilitates their ordered degradation during apoptosis. May also play a role in mediating CASP3 cleavage of KRT18. Regulates degradation of intermediate filaments during apoptosis. May play a role in the general transcription machinery in the nucleus and might be an important regulator of the activity of GTF3C3. Inhibits DNA transcription in vitro. This Mus musculus (Mouse) protein is Death effector domain-containing protein (Dedd).